A 176-amino-acid polypeptide reads, in one-letter code: RNA pyrophosphohydrolase (176 aa).

Residues 6–149 form the Nudix hydrolase domain; the sequence is GYRPNVGIVI…KRDVYRRVMK (144 aa). A Nudix box motif is present at residues 38-59; sequence GGINPGESAEQAMYRELFEEVG.

Belongs to the Nudix hydrolase family. RppH subfamily. Requires a divalent metal cation as cofactor.

Its function is as follows. Accelerates the degradation of transcripts by removing pyrophosphate from the 5'-end of triphosphorylated RNA, leading to a more labile monophosphorylated state that can stimulate subsequent ribonuclease cleavage. The chain is RNA pyrophosphohydrolase from Shigella boydii serotype 18 (strain CDC 3083-94 / BS512).